Consider the following 336-residue polypeptide: tRNA N6-adenosine threonylcarbamoyltransferase (336 aa).

Fe cation is bound by residues H114 and H118. Substrate-binding positions include 136 to 140 (LVSGG), D169, G182, D186, and N275. D301 contacts Fe cation.

The protein belongs to the KAE1 / TsaD family. Requires Fe(2+) as cofactor.

It localises to the cytoplasm. The enzyme catalyses L-threonylcarbamoyladenylate + adenosine(37) in tRNA = N(6)-L-threonylcarbamoyladenosine(37) in tRNA + AMP + H(+). Required for the formation of a threonylcarbamoyl group on adenosine at position 37 (t(6)A37) in tRNAs that read codons beginning with adenine. Is involved in the transfer of the threonylcarbamoyl moiety of threonylcarbamoyl-AMP (TC-AMP) to the N6 group of A37, together with TsaE and TsaB. TsaD likely plays a direct catalytic role in this reaction. In Streptococcus pneumoniae (strain Hungary19A-6), this protein is tRNA N6-adenosine threonylcarbamoyltransferase.